Consider the following 141-residue polypeptide: Ribosome-binding factor A (141 aa).

The protein belongs to the RbfA family. In terms of assembly, monomer. Binds 30S ribosomal subunits, but not 50S ribosomal subunits or 70S ribosomes.

It is found in the cytoplasm. Its function is as follows. One of several proteins that assist in the late maturation steps of the functional core of the 30S ribosomal subunit. Associates with free 30S ribosomal subunits (but not with 30S subunits that are part of 70S ribosomes or polysomes). Required for efficient processing of 16S rRNA. May interact with the 5'-terminal helix region of 16S rRNA. This is Ribosome-binding factor A from Beijerinckia indica subsp. indica (strain ATCC 9039 / DSM 1715 / NCIMB 8712).